The chain runs to 264 residues: 3-dehydroquinate dehydratase (264 aa).

Residues 50–52 (EWR) and Arg-86 contribute to the 3-dehydroquinate site. The active-site Proton donor/acceptor is the His-148. The active-site Schiff-base intermediate with substrate is the Lys-175. 3 residues coordinate 3-dehydroquinate: Arg-217, Ser-236, and Gln-240.

Belongs to the type-I 3-dehydroquinase family. In terms of assembly, homodimer.

The enzyme catalyses 3-dehydroquinate = 3-dehydroshikimate + H2O. The protein operates within metabolic intermediate biosynthesis; chorismate biosynthesis; chorismate from D-erythrose 4-phosphate and phosphoenolpyruvate: step 3/7. Its function is as follows. Involved in the third step of the chorismate pathway, which leads to the biosynthesis of aromatic amino acids. Catalyzes the cis-dehydration of 3-dehydroquinate (DHQ) and introduces the first double bond of the aromatic ring to yield 3-dehydroshikimate. The protein is 3-dehydroquinate dehydratase of Albidiferax ferrireducens (strain ATCC BAA-621 / DSM 15236 / T118) (Rhodoferax ferrireducens).